The following is a 211-amino-acid chain: Probable transcriptional regulatory protein SgaR (211 aa).

Residues 10-126 form the Response regulatory domain; the sequence is EVSIVDQNPV…VLLEAVVSVA (117 aa). Residue aspartate 15 is modified to 4-aspartylphosphate. In terms of domain architecture, HTH luxR-type spans 141 to 206; it reads NHDPLESLTA…MAVALHVSIN (66 aa). Residues 165–184 constitute a DNA-binding region (H-T-H motif); sequence NLQIAARTGISRNTVKYHLK.

In terms of biological role, not known. Could act on the sgaA gene expression. The chain is Probable transcriptional regulatory protein SgaR (sgaR) from Hyphomicrobium methylovorum.